The sequence spans 295 residues: Methionine aminopeptidase (295 aa).

A substrate-binding site is contributed by His-63. Positions 83, 94, and 154 each coordinate a divalent metal cation. His-162 is a substrate binding site. A divalent metal cation contacts are provided by Glu-188 and Glu-281.

The protein belongs to the peptidase M24A family. Methionine aminopeptidase archaeal type 2 subfamily. In terms of assembly, monomer. The cofactor is Fe(2+). Requires Co(2+) as cofactor. Ni(2+) is required as a cofactor. It depends on Mn(2+) as a cofactor.

The enzyme catalyses Release of N-terminal amino acids, preferentially methionine, from peptides and arylamides.. Functionally, removes the N-terminal methionine from nascent proteins. The N-terminal methionine is often cleaved when the second residue in the primary sequence is small and uncharged (Met-Ala-, Cys, Gly, Pro, Ser, Thr, or Val). The polypeptide is Methionine aminopeptidase (Thermococcus onnurineus (strain NA1)).